We begin with the raw amino-acid sequence, 118 residues long: Beta-2-microglobulin (118 aa).

The first 21 residues, 1–21 (MESRWGIVVIGLLCCVSWVEA), serve as a signal peptide directing secretion. The Ig-like C1-type domain maps to 26 to 113 (PKIQVYTRSP…THNSVTKSVK (88 aa)). C46 and C101 are oxidised to a cystine.

The protein belongs to the beta-2-microglobulin family. In terms of assembly, heterodimer of an alpha chain and a beta chain. Beta-2-microglobulin is the beta-chain of major histocompatibility complex class I molecules.

It is found in the secreted. Component of the class I major histocompatibility complex (MHC). Involved in the presentation of peptide antigens to the immune system. This Tachyglossus aculeatus aculeatus (Southeast Australian short-beaked echidna) protein is Beta-2-microglobulin (B2M).